The chain runs to 219 residues: Glutathione S-transferase F13 (219 aa).

One can recognise a GST N-terminal domain in the interval 2–82; the sequence is AMKLYGDEMS…YIAEKHRDKG (81 aa). Glutathione-binding positions include 11–12, 40–41, 53–54, and 66–67; these read SA, HK, KV, and ES. The 128-residue stretch at 90 to 217 folds into the GST C-terminal domain; sequence DPKEAAIVKL…VSPGLTVAPT (128 aa).

This sequence belongs to the GST superfamily. Phi family.

Its subcellular location is the cytoplasm. The protein localises to the cytosol. It carries out the reaction RX + glutathione = an S-substituted glutathione + a halide anion + H(+). Its function is as follows. May be involved in the conjugation of reduced glutathione to a wide number of exogenous and endogenous hydrophobic electrophiles and have a detoxification role against certain herbicides. The sequence is that of Glutathione S-transferase F13 (GSTF13) from Arabidopsis thaliana (Mouse-ear cress).